The following is a 191-amino-acid chain: Potassium-transporting ATPase KdpC subunit (191 aa).

The chain crosses the membrane as a helical span at residues 6–26 (PALVLFILLTLLTGGVYPLLT).

Belongs to the KdpC family. In terms of assembly, the system is composed of three essential subunits: KdpA, KdpB and KdpC.

It is found in the cell inner membrane. Its function is as follows. Part of the high-affinity ATP-driven potassium transport (or Kdp) system, which catalyzes the hydrolysis of ATP coupled with the electrogenic transport of potassium into the cytoplasm. This subunit acts as a catalytic chaperone that increases the ATP-binding affinity of the ATP-hydrolyzing subunit KdpB by the formation of a transient KdpB/KdpC/ATP ternary complex. This chain is Potassium-transporting ATPase KdpC subunit, found in Klebsiella pneumoniae subsp. pneumoniae (strain ATCC 700721 / MGH 78578).